Here is a 131-residue protein sequence, read N- to C-terminus: Profilin-1 (131 aa).

This sequence belongs to the profilin family. As to quaternary structure, occurs in many kinds of cells as a complex with monomeric actin in a 1:1 ratio.

It localises to the cytoplasm. The protein localises to the cytoskeleton. In terms of biological role, binds to actin and affects the structure of the cytoskeleton. At high concentrations, profilin prevents the polymerization of actin, whereas it enhances it at low concentrations. By binding to PIP2, it inhibits the formation of IP3 and DG. This chain is Profilin-1, found in Hevea brasiliensis (Para rubber tree).